Reading from the N-terminus, the 109-residue chain is Iron-sulfur cluster assembly protein CyaY (109 aa).

The protein belongs to the frataxin family.

Functionally, involved in iron-sulfur (Fe-S) cluster assembly. May act as a regulator of Fe-S biogenesis. In Bordetella pertussis (strain Tohama I / ATCC BAA-589 / NCTC 13251), this protein is Iron-sulfur cluster assembly protein CyaY.